The sequence spans 405 residues: Phosphoglycerate kinase (405 aa).

Substrate contacts are provided by residues D24–N26, R40, H63–R66, R122, and R162. Residues K212, E331, and G361–S364 contribute to the ATP site.

The protein belongs to the phosphoglycerate kinase family. Monomer.

It is found in the cytoplasm. The catalysed reaction is (2R)-3-phosphoglycerate + ATP = (2R)-3-phospho-glyceroyl phosphate + ADP. It functions in the pathway carbohydrate degradation; glycolysis; pyruvate from D-glyceraldehyde 3-phosphate: step 2/5. The polypeptide is Phosphoglycerate kinase (Corynebacterium efficiens (strain DSM 44549 / YS-314 / AJ 12310 / JCM 11189 / NBRC 100395)).